The primary structure comprises 180 residues: Endoribonuclease YbeY (180 aa).

The Zn(2+) site is built by His149, His153, and His159.

The protein belongs to the endoribonuclease YbeY family. The cofactor is Zn(2+).

The protein resides in the cytoplasm. Its function is as follows. Single strand-specific metallo-endoribonuclease involved in late-stage 70S ribosome quality control and in maturation of the 3' terminus of the 16S rRNA. This Prochlorococcus marinus subsp. pastoris (strain CCMP1986 / NIES-2087 / MED4) protein is Endoribonuclease YbeY.